Consider the following 218-residue polypeptide: MRDPEFWHNKWAANQIGFHLEDVNPLLIRFWSDLAPKRSEKVLVPLCGKSEDLIWLANQHDSVQGVELSQIAVRSFFAEHFYTPTVTRLNAQHELYQFDELTLFTGDFFTAPVESVDLVYDRAALVALPEEMRTEYAQRVLQLLKPGGRILLVSMDYVQTELSGPPFSVPEAEIRTLFMGCEVRRVYQDTSIDPHLNKRTQAGLSRFAEEVWVIEKSE.

Trp-11, Leu-46, Glu-67, and Arg-122 together coordinate S-adenosyl-L-methionine.

The protein belongs to the class I-like SAM-binding methyltransferase superfamily. TPMT family.

The protein localises to the cytoplasm. The catalysed reaction is S-adenosyl-L-methionine + a thiopurine = S-adenosyl-L-homocysteine + a thiopurine S-methylether.. The protein is Thiopurine S-methyltransferase of Vibrio cholerae serotype O1 (strain ATCC 39541 / Classical Ogawa 395 / O395).